The sequence spans 226 residues: Pathogenesis-related protein R minor form (226 aa).

Residues 1–25 (MNFLKSFPFYAFLCFGQYFVAVTHA) form the signal peptide. 8 disulfide bridges follow: Cys-34-Cys-225, Cys-75-Cys-85, Cys-90-Cys-96, Cys-140-Cys-214, Cys-145-Cys-197, Cys-153-Cys-163, Cys-167-Cys-176, and Cys-177-Cys-184.

The protein belongs to the thaumatin family.

It localises to the vacuole. The polypeptide is Pathogenesis-related protein R minor form (Nicotiana tabacum (Common tobacco)).